Consider the following 331-residue polypeptide: UPF0194 membrane protein Ent638_1286 (331 aa).

An N-terminal signal peptide occupies residues Met-1 to Ala-16. Residues Glu-107–Ala-208 adopt a coiled-coil conformation.

It belongs to the UPF0194 family.

The protein resides in the periplasm. This Enterobacter sp. (strain 638) protein is UPF0194 membrane protein Ent638_1286.